We begin with the raw amino-acid sequence, 544 residues long: Chaperonin GroEL (544 aa).

Residues 30–33 (TLGP), lysine 51, 87–91 (DGTTT), glycine 415, and aspartate 495 contribute to the ATP site.

It belongs to the chaperonin (HSP60) family. Forms a cylinder of 14 subunits composed of two heptameric rings stacked back-to-back. Interacts with the co-chaperonin GroES.

Its subcellular location is the cytoplasm. The enzyme catalyses ATP + H2O + a folded polypeptide = ADP + phosphate + an unfolded polypeptide.. Functionally, together with its co-chaperonin GroES, plays an essential role in assisting protein folding. The GroEL-GroES system forms a nano-cage that allows encapsulation of the non-native substrate proteins and provides a physical environment optimized to promote and accelerate protein folding. This chain is Chaperonin GroEL, found in Neisseria meningitidis serogroup B (strain ATCC BAA-335 / MC58).